Reading from the N-terminus, the 520-residue chain is GMP synthase [glutamine-hydrolyzing] (520 aa).

The Glutamine amidotransferase type-1 domain maps to 12 to 205 (KIIVLDYGSQ…AISICGARGD (194 aa)). Cys-89 (nucleophile) is an active-site residue. Residues His-179 and Glu-181 contribute to the active site. One can recognise a GMPS ATP-PPase domain in the interval 206–395 (WSMDNFIDME…LGMPEEIVWR (190 aa)). 233-239 (SGGVDSS) is a binding site for ATP.

As to quaternary structure, homodimer.

It catalyses the reaction XMP + L-glutamine + ATP + H2O = GMP + L-glutamate + AMP + diphosphate + 2 H(+). It functions in the pathway purine metabolism; GMP biosynthesis; GMP from XMP (L-Gln route): step 1/1. Catalyzes the synthesis of GMP from XMP. The chain is GMP synthase [glutamine-hydrolyzing] from Streptococcus pyogenes serotype M6 (strain ATCC BAA-946 / MGAS10394).